The primary structure comprises 568 residues: Cytochrome P450 monooxygenase 41 (568 aa).

A helical transmembrane segment spans residues 21 to 41; that stretch reads LTSLVPLILSVMVCLIATVTI. N-linked (GlcNAc...) asparagine glycosylation is found at N321 and N377. Residue C514 participates in heme binding.

Belongs to the cytochrome P450 family. Heme is required as a cofactor.

The protein resides in the membrane. It participates in secondary metabolite biosynthesis. Functionally, cytochrome P450 monooxygenase that is able to use 3,5-dimethoxy-trans-stilbene and 3,5,4'-trimethoxy-trans-stilbene as substrates for oxidation. The chain is Cytochrome P450 monooxygenase 41 from Postia placenta (strain ATCC 44394 / Madison 698-R) (Brown rot fungus).